The following is a 220-amino-acid chain: Deoxyribose-phosphate aldolase (220 aa).

D89 (proton donor/acceptor) is an active-site residue. The active-site Schiff-base intermediate with acetaldehyde is the K151. The Proton donor/acceptor role is filled by K180.

Belongs to the DeoC/FbaB aldolase family. DeoC type 1 subfamily.

The protein localises to the cytoplasm. The catalysed reaction is 2-deoxy-D-ribose 5-phosphate = D-glyceraldehyde 3-phosphate + acetaldehyde. It functions in the pathway carbohydrate degradation; 2-deoxy-D-ribose 1-phosphate degradation; D-glyceraldehyde 3-phosphate and acetaldehyde from 2-deoxy-alpha-D-ribose 1-phosphate: step 2/2. Catalyzes a reversible aldol reaction between acetaldehyde and D-glyceraldehyde 3-phosphate to generate 2-deoxy-D-ribose 5-phosphate. This Streptococcus pneumoniae serotype 4 (strain ATCC BAA-334 / TIGR4) protein is Deoxyribose-phosphate aldolase.